The sequence spans 396 residues: 1-deoxy-D-xylulose 5-phosphate reductoisomerase (396 aa).

Positions 13, 14, 15, 16, and 127 each coordinate NADPH. Lysine 128 contributes to the 1-deoxy-D-xylulose 5-phosphate binding site. Residue glutamate 129 participates in NADPH binding. Mn(2+) is bound at residue aspartate 153. Residues serine 154, glutamate 155, serine 184, and histidine 207 each coordinate 1-deoxy-D-xylulose 5-phosphate. Glutamate 155 contributes to the Mn(2+) binding site. An NADPH-binding site is contributed by glycine 213. Positions 220, 225, 226, and 229 each coordinate 1-deoxy-D-xylulose 5-phosphate. Mn(2+) is bound at residue glutamate 229.

It belongs to the DXR family. Mg(2+) is required as a cofactor. Requires Mn(2+) as cofactor.

It catalyses the reaction 2-C-methyl-D-erythritol 4-phosphate + NADP(+) = 1-deoxy-D-xylulose 5-phosphate + NADPH + H(+). It participates in isoprenoid biosynthesis; isopentenyl diphosphate biosynthesis via DXP pathway; isopentenyl diphosphate from 1-deoxy-D-xylulose 5-phosphate: step 1/6. Functionally, catalyzes the NADPH-dependent rearrangement and reduction of 1-deoxy-D-xylulose-5-phosphate (DXP) to 2-C-methyl-D-erythritol 4-phosphate (MEP). The protein is 1-deoxy-D-xylulose 5-phosphate reductoisomerase of Pseudomonas aeruginosa (strain UCBPP-PA14).